We begin with the raw amino-acid sequence, 423 residues long: uncharacterized protein (423 aa).

The disordered stretch occupies residues 383–423 (ARGTTGGGGTRSGTSTDGQEDGRKPPVVVIREQPPPGNPPR).

It belongs to the mycobacterial PPE family.

This is an uncharacterized protein from Mycobacterium tuberculosis (strain CDC 1551 / Oshkosh).